The chain runs to 207 residues: Ribonuclease HII (207 aa).

Residues 20–207 (QLFAGVDEVG…KPVKRVLGIE (188 aa)) enclose the RNase H type-2 domain. The a divalent metal cation site is built by aspartate 26, glutamate 27, and aspartate 118.

It belongs to the RNase HII family. Mn(2+) is required as a cofactor. The cofactor is Mg(2+).

Its subcellular location is the cytoplasm. It catalyses the reaction Endonucleolytic cleavage to 5'-phosphomonoester.. Endonuclease that specifically degrades the RNA of RNA-DNA hybrids. The chain is Ribonuclease HII from Aliivibrio salmonicida (strain LFI1238) (Vibrio salmonicida (strain LFI1238)).